A 131-amino-acid chain; its full sequence is D-ribose pyranase (131 aa).

His20 serves as the catalytic Proton donor. Residues Asp28, His98, and 120–122 (YAN) each bind substrate.

The protein belongs to the RbsD / FucU family. RbsD subfamily. As to quaternary structure, homodecamer.

The protein resides in the cytoplasm. It catalyses the reaction beta-D-ribopyranose = beta-D-ribofuranose. Its pathway is carbohydrate metabolism; D-ribose degradation; D-ribose 5-phosphate from beta-D-ribopyranose: step 1/2. Functionally, catalyzes the interconversion of beta-pyran and beta-furan forms of D-ribose. The polypeptide is D-ribose pyranase (Clostridium perfringens (strain SM101 / Type A)).